The chain runs to 248 residues: MYKLVLVRHGESEWNRENLFTGWTDVKLSEKGISEALEGGRVLKQNGYSFDIAFSSMLVRANDTLNIILRELGQSYIDVEKSWRLNERHYGALQGLNKAETAEKYGEDQVLMWRRSYDIPPMPLEESDKRHPIHDLRYKGIPKSELPSTECLKDTVARVIPYWTDKIAKAIIEGKRVIIAAHGNSLRALVKYLDNMSDDDILKLNIPTGIPLVYELDQDLRPIKHYYLGDEDKIKAAMESVANQGKKK.

Substrate contacts are provided by residues arginine 8–asparagine 15, threonine 21–glycine 22, arginine 60, glutamate 87–tyrosine 90, lysine 98, arginine 114–arginine 115, and glycine 183–asparagine 184. Catalysis depends on histidine 9, which acts as the Tele-phosphohistidine intermediate. Glutamate 87 (proton donor/acceptor) is an active-site residue.

This sequence belongs to the phosphoglycerate mutase family. BPG-dependent PGAM subfamily.

The enzyme catalyses (2R)-2-phosphoglycerate = (2R)-3-phosphoglycerate. The protein operates within carbohydrate degradation; glycolysis; pyruvate from D-glyceraldehyde 3-phosphate: step 3/5. Its function is as follows. Catalyzes the interconversion of 2-phosphoglycerate and 3-phosphoglycerate. This is 2,3-bisphosphoglycerate-dependent phosphoglycerate mutase from Borrelia hermsii (strain HS1 / DAH).